We begin with the raw amino-acid sequence, 554 residues long: Dihydroxy-acid dehydratase (554 aa).

D78 contacts Mg(2+). Residue C119 participates in [2Fe-2S] cluster binding. Mg(2+) is bound by residues D120 and K121. The residue at position 121 (K121) is an N6-carboxylysine. A [2Fe-2S] cluster-binding site is contributed by C191. Mg(2+) is bound at residue E442. Catalysis depends on S468, which acts as the Proton acceptor.

Belongs to the IlvD/Edd family. In terms of assembly, homodimer. [2Fe-2S] cluster is required as a cofactor. Requires Mg(2+) as cofactor.

It catalyses the reaction (2R)-2,3-dihydroxy-3-methylbutanoate = 3-methyl-2-oxobutanoate + H2O. It carries out the reaction (2R,3R)-2,3-dihydroxy-3-methylpentanoate = (S)-3-methyl-2-oxopentanoate + H2O. Its pathway is amino-acid biosynthesis; L-isoleucine biosynthesis; L-isoleucine from 2-oxobutanoate: step 3/4. It participates in amino-acid biosynthesis; L-valine biosynthesis; L-valine from pyruvate: step 3/4. Functions in the biosynthesis of branched-chain amino acids. Catalyzes the dehydration of (2R,3R)-2,3-dihydroxy-3-methylpentanoate (2,3-dihydroxy-3-methylvalerate) into 2-oxo-3-methylpentanoate (2-oxo-3-methylvalerate) and of (2R)-2,3-dihydroxy-3-methylbutanoate (2,3-dihydroxyisovalerate) into 2-oxo-3-methylbutanoate (2-oxoisovalerate), the penultimate precursor to L-isoleucine and L-valine, respectively. This is Dihydroxy-acid dehydratase from Hydrogenobaculum sp. (strain Y04AAS1).